Reading from the N-terminus, the 256-residue chain is uncharacterized protein (256 aa).

The next 2 helical transmembrane spans lie at 155–175 (ITGMLAAYAVLQAVEGVGLWL) and 203–223 (ITTTRVVTFSINVAAVVYLLI).

The protein resides in the cell membrane. This is an uncharacterized protein from Mycobacterium bovis (strain ATCC BAA-935 / AF2122/97).